The sequence spans 178 residues: MNKEIIAKRYALALFQIATEKQLLDQLEEEIRAVWQVFAENDKFLSLLTYPKLSLEKKKALIKETFAAVSSPLRNTLLLLLERHRIDIVPQLAEQFIHLVNEARGVAEATAYSARPLTEEEKRALSDVFAKKMGKTTLHIENIVDPSLIGGVKLRIGNRIYDGSISGKLERIQRQLIG.

Belongs to the ATPase delta chain family. As to quaternary structure, F-type ATPases have 2 components, F(1) - the catalytic core - and F(0) - the membrane proton channel. F(1) has five subunits: alpha(3), beta(3), gamma(1), delta(1), epsilon(1). F(0) has three main subunits: a(1), b(2) and c(10-14). The alpha and beta chains form an alternating ring which encloses part of the gamma chain. F(1) is attached to F(0) by a central stalk formed by the gamma and epsilon chains, while a peripheral stalk is formed by the delta and b chains.

The protein localises to the cell membrane. F(1)F(0) ATP synthase produces ATP from ADP in the presence of a proton or sodium gradient. F-type ATPases consist of two structural domains, F(1) containing the extramembraneous catalytic core and F(0) containing the membrane proton channel, linked together by a central stalk and a peripheral stalk. During catalysis, ATP synthesis in the catalytic domain of F(1) is coupled via a rotary mechanism of the central stalk subunits to proton translocation. Functionally, this protein is part of the stalk that links CF(0) to CF(1). It either transmits conformational changes from CF(0) to CF(1) or is implicated in proton conduction. The chain is ATP synthase subunit delta from Geobacillus sp. (strain WCH70).